A 773-amino-acid polypeptide reads, in one-letter code: Molybdenum cofactor sulfurase (773 aa).

An N6-(pyridoxal phosphate)lysine modification is found at lysine 243. Residue cysteine 410 is part of the active site. The MOSC domain maps to leucine 632–glutamate 773. Serine 731 bears the Phosphoserine mark.

Belongs to the class-V pyridoxal-phosphate-dependent aminotransferase family. MOCOS subfamily. The cofactor is pyridoxal 5'-phosphate.

The catalysed reaction is Mo-molybdopterin + L-cysteine + AH2 = thio-Mo-molybdopterin + L-alanine + A + H2O. Its pathway is cofactor biosynthesis; molybdopterin biosynthesis. Sulfurates the molybdenum cofactor. Sulfation of molybdenum is essential for xanthine dehydrogenase (XDH) and aldehyde oxidase (ADO) enzymes in which molybdenum cofactor is liganded by 1 oxygen and 1 sulfur atom in active form. This Drosophila ananassae (Fruit fly) protein is Molybdenum cofactor sulfurase.